The sequence spans 157 residues: MSIHEFSARLINGEEKALSDYKDQVLLIVNTASKCGLTPQYEELQILYETYKDQGFTVLGFPSNQFMNQEPGDHNEIAAFCERNYGVSFPIFEKVKVNGKEAHPLFQYLTSQQGGLFTEKIKWNFTKFLIDRSGNVVKRYAPSTSPIKIKDDIEELL.

The active site involves cysteine 35.

The protein belongs to the glutathione peroxidase family.

The sequence is that of Glutathione peroxidase homolog BsaA (bsaA) from Halalkalibacterium halodurans (strain ATCC BAA-125 / DSM 18197 / FERM 7344 / JCM 9153 / C-125) (Bacillus halodurans).